Consider the following 158-residue polypeptide: Dysbindin domain-containing protein 1 (158 aa).

Disordered regions lie at residues 1–50 (MEPP…VPAP) and 93–158 (ADSD…PQED). 2 positions are modified to phosphoserine: serine 95 and serine 119. Residues 125–141 (TRAEQSHEKQPLGDPER) show a composition bias toward basic and acidic residues.

This sequence belongs to the dysbindin family.

The chain is Dysbindin domain-containing protein 1 (DBNDD1) from Homo sapiens (Human).